A 231-amino-acid polypeptide reads, in one-letter code: MPENLAKAICNPLFPALDSMLRAGRHISSEDLDNHALLSDYEVELSAFYQRYNTELVKAPEGFFYLRPRSTSLIARSVLSELDMLVGKVLCFLYLSPERLAHEGIFTNQELYEELIALTDEKKLMKLVTNRASGSDLDREKLFEKVRTSLRRLRRLGMIINVGDSGKFSISEAVFRFGADVRAGDDIREAQLRLIRDGEAVVHTQEPTQASLLADEEEQDYNEQAELEGEA.

The disordered stretch occupies residues 211 to 231 (SLLADEEEQDYNEQAELEGEA). The span at 214–231 (ADEEEQDYNEQAELEGEA) shows a compositional bias: acidic residues.

It belongs to the MukE family. In terms of assembly, interacts, and probably forms a ternary complex, with MukF and MukB. The complex formation is stimulated by calcium or magnesium.

It localises to the cytoplasm. Its subcellular location is the nucleoid. Its function is as follows. Involved in chromosome condensation, segregation and cell cycle progression. May participate in facilitating chromosome segregation by condensation DNA from both sides of a centrally located replisome during cell division. Probably acts via its interaction with MukB and MukF. The protein is Chromosome partition protein MukE of Vibrio vulnificus (strain CMCP6).